Reading from the N-terminus, the 1019-residue chain is Exportin-T (1019 aa).

Belongs to the exportin family.

It localises to the nucleus. The protein localises to the cytoplasm. In terms of biological role, tRNA nucleus export receptor which facilitates tRNA translocation across the nuclear pore complex. Involved in pre-tRNA splicing, probably by affecting the interaction of pre-tRNA with splicing endonuclease. This Chaetomium globosum (strain ATCC 6205 / CBS 148.51 / DSM 1962 / NBRC 6347 / NRRL 1970) (Soil fungus) protein is Exportin-T (LOS1).